The sequence spans 767 residues: Two-component response regulator-like PRR73 (767 aa).

Positions 1–64 are disordered; that stretch reads MGSACEAGTD…EPQQTDEQKE (64 aa). A Response regulatory domain is found at 82–200; it reads RVLLVENDDS…ELKNLWQHVW (119 aa). The span at 205–214 shows a compositional bias: low complexity; the sequence is SSSGSGSESG. 5 disordered regions span residues 205-272, 312-388, 476-546, 646-701, and 727-767; these read SSSG…QSSW, RWLP…NEPT, ASNQ…RGKV, ANYS…SGSG, and NFGK…DEDR. Residues 238–252 show a composition bias toward acidic residues; it reads DNEDDDDNDEDDDDL. Polar residues-rich tracts occupy residues 263–272, 343–361, and 488–497; these read DNGSGTQSSW, RNSS…VNPT, and CSPQDNSSEA. Positions 518-531 are enriched in low complexity; the sequence is GSNGSSNNNDMGSS. A compositionally biased stretch (polar residues) spans 532–543; that stretch reads TKNAITKPSSNR. The segment covering 689 to 700 has biased composition (gly residues); the sequence is GAGGGNGSGSGS. The CCT domain maps to 712-754; the sequence is REAALNKFRQKRKVRNFGKKVRYQSRKRLAEQRPRIRGQFVRQ. Residues 727 to 738 show a composition bias toward basic residues; that stretch reads NFGKKVRYQSRK.

It belongs to the ARR-like family.

The protein localises to the nucleus. Its function is as follows. Controls photoperiodic flowering response. Seems to be one of the component of the circadian clock. Expression of several members of the ARR-like family is controlled by circadian rhythm. The particular coordinated sequential expression of PRR73, PRR37, PRR95, PRR59 and PPR1 result to circadian waves that may be at the basis of the endogenous circadian clock. This Oryza sativa subsp. indica (Rice) protein is Two-component response regulator-like PRR73 (PRR73).